Consider the following 195-residue polypeptide: Large ribosomal subunit protein mL58 (195 aa).

The N-terminal 18 residues, 1–18 (MIGRGVCCRSFHTAGSAW), are a transit peptide targeting the mitochondrion.

Belongs to the mitochondrion-specific ribosomal protein mL58 family. As to quaternary structure, component of the mitochondrial large ribosomal subunit (mt-LSU). Mature yeast 74S mitochondrial ribosomes consist of a small (37S) and a large (54S) subunit. The 37S small subunit contains a 15S ribosomal RNA (15S mt-rRNA) and 34 different proteins. The 54S large subunit contains a 21S rRNA (21S mt-rRNA) and 46 different proteins.

Its subcellular location is the mitochondrion. Component of the mitochondrial ribosome (mitoribosome), a dedicated translation machinery responsible for the synthesis of mitochondrial genome-encoded proteins, including at least some of the essential transmembrane subunits of the mitochondrial respiratory chain. The mitoribosomes are attached to the mitochondrial inner membrane and translation products are cotranslationally integrated into the membrane. In Saccharomyces cerevisiae (strain ATCC 204508 / S288c) (Baker's yeast), this protein is Large ribosomal subunit protein mL58 (MRPL20).